A 560-amino-acid chain; its full sequence is Protein tweety homolog 3 (560 aa).

Topologically, residues 1 to 43 are extracellular; that stretch reads MAAVVNYSPPWWVNLFHRLPHFNLQFQQTSSDFRPDDSDYQKA. The chain crosses the membrane as a helical span at residues 44–64; the sequence is VLLLGAAALVCLALDLLFLLF. At 65–87 the chain is on the cytoplasmic side; it reads YSFWLCCCRRKNHDSPNADCCCT. Residues 88–108 form a helical membrane-spanning segment; the sequence is AWCVIIATLVCSAGIAVGFYG. Over 109–212 the chain is Extracellular; sequence NGETCDGVTR…TEQYDWYRWL (104 aa). Residues glutamate 111 and aspartate 114 each contribute to the Ca(2+) site. N-linked (GlcNAc...) asparagine glycans are attached at residues asparagine 127 and asparagine 145. A helical membrane pass occupies residues 213-233; it reads GYLGLLLFDVIICLLVLVGLI. At 234-238 the chain is on the cytoplasmic side; the sequence is RNSRS. The chain crosses the membrane as a helical span at residues 239 to 259; the sequence is ILIGVCFLGVLTLVISWASLG. Over 260-387 the chain is Extracellular; that stretch reads LEFSFAVGAS…LTGLCYDGVE (128 aa). 2 disulfide bridges follow: cysteine 272/cysteine 382 and cysteine 300/cysteine 367. An N-linked (GlcNAc...) asparagine glycan is attached at asparagine 352. A helical transmembrane segment spans residues 388-408; that stretch reads GLIYLVLFSFVTALMFSSIVC. Topologically, residues 409-560 are cytoplasmic; sequence SVPHTWQSKR…AIHRPHSAIH (152 aa). 2 disordered regions span residues 415 to 435 and 486 to 560; these read QSKR…GSRA and TPRC…SAIH. Polar residues predominate over residues 539-549; that stretch reads TSRSAPNSRPN.

It belongs to the tweety family. In terms of assembly, homotetramer; disulfide-linked. Forms cis-homodimers in the presence of Ca(2+).

It is found in the cell membrane. It carries out the reaction chloride(in) = chloride(out). The enzyme catalyses L-glutamate(out) = L-glutamate(in). In terms of biological role, may act as a calcium-independent, swelling-dependent volume-regulated anion channel (VRAC-swell) which plays a pivotal role in the process of regulatory volume decrease (RVD) in the brain through the efflux of anions like chloride and organic osmolytes like glutamate. Probable large-conductance Ca(2+)-activated chloride channel. The chain is Protein tweety homolog 3 (ttyh3b) from Danio rerio (Zebrafish).